A 229-amino-acid chain; its full sequence is Adenosylcobinamide-GDP ribazoletransferase (229 aa).

The next 6 helical transmembrane spans lie at 31-51 (AMLLAPLAALPLGLLVAAVLA), 55-75 (AVELPPLAVGLLAVGALAASS), 111-131 (AGVLATVVVAGVQAAALATLL), 134-154 (PLLAGALVCLSRCALWIVCCT), 176-196 (VAVLGGLLLSAVGGLVVLVLV), and 208-228 (GDVMGAAVELALAATLLAWAA).

The protein belongs to the CobS family. Requires Mg(2+) as cofactor.

Its subcellular location is the cell membrane. It catalyses the reaction alpha-ribazole + adenosylcob(III)inamide-GDP = adenosylcob(III)alamin + GMP + H(+). The catalysed reaction is alpha-ribazole 5'-phosphate + adenosylcob(III)inamide-GDP = adenosylcob(III)alamin 5'-phosphate + GMP + H(+). It participates in cofactor biosynthesis; adenosylcobalamin biosynthesis; adenosylcobalamin from cob(II)yrinate a,c-diamide: step 7/7. Functionally, joins adenosylcobinamide-GDP and alpha-ribazole to generate adenosylcobalamin (Ado-cobalamin). Also synthesizes adenosylcobalamin 5'-phosphate from adenosylcobinamide-GDP and alpha-ribazole 5'-phosphate. The polypeptide is Adenosylcobinamide-GDP ribazoletransferase (Nocardioides sp. (strain ATCC BAA-499 / JS614)).